A 202-amino-acid chain; its full sequence is Large ribosomal subunit protein bL25 (202 aa).

A disordered region spans residues 182-202 (QTAPEEEEGTAAETTEPELAE). Over residues 185 to 202 (PEEEEGTAAETTEPELAE) the composition is skewed to acidic residues.

This sequence belongs to the bacterial ribosomal protein bL25 family. CTC subfamily. As to quaternary structure, part of the 50S ribosomal subunit; part of the 5S rRNA/L5/L18/L25 subcomplex. Contacts the 5S rRNA. Binds to the 5S rRNA independently of L5 and L18.

This is one of the proteins that binds to the 5S RNA in the ribosome where it forms part of the central protuberance. In Enterococcus faecalis (strain ATCC 700802 / V583), this protein is Large ribosomal subunit protein bL25.